Here is a 296-residue protein sequence, read N- to C-terminus: tRNA U34 carboxymethyltransferase (296 aa).

Carboxy-S-adenosyl-L-methionine is bound by residues K64, W78, K83, G102, 124–126 (DPS), 151–152 (VE), Y171, and R286.

The protein belongs to the class I-like SAM-binding methyltransferase superfamily. CmoB family. Homotetramer.

It catalyses the reaction carboxy-S-adenosyl-L-methionine + 5-hydroxyuridine(34) in tRNA = 5-carboxymethoxyuridine(34) in tRNA + S-adenosyl-L-homocysteine + H(+). Its function is as follows. Catalyzes carboxymethyl transfer from carboxy-S-adenosyl-L-methionine (Cx-SAM) to 5-hydroxyuridine (ho5U) to form 5-carboxymethoxyuridine (cmo5U) at position 34 in tRNAs. In Sulfurimonas denitrificans (strain ATCC 33889 / DSM 1251) (Thiomicrospira denitrificans (strain ATCC 33889 / DSM 1251)), this protein is tRNA U34 carboxymethyltransferase.